The sequence spans 242 residues: ATP-dependent dethiobiotin synthetase BioD (242 aa).

E12 to V17 is an ATP binding site. Mg(2+) is bound at residue T16. The active site involves K37. Residue S41 participates in substrate binding. Residues D51 and E112–G115 each bind ATP. 2 residues coordinate Mg(2+): D51 and E112.

The protein belongs to the dethiobiotin synthetase family. In terms of assembly, homodimer. It depends on Mg(2+) as a cofactor.

The protein resides in the cytoplasm. It carries out the reaction (7R,8S)-7,8-diammoniononanoate + CO2 + ATP = (4R,5S)-dethiobiotin + ADP + phosphate + 3 H(+). The protein operates within cofactor biosynthesis; biotin biosynthesis; biotin from 7,8-diaminononanoate: step 1/2. In terms of biological role, catalyzes a mechanistically unusual reaction, the ATP-dependent insertion of CO2 between the N7 and N8 nitrogen atoms of 7,8-diaminopelargonic acid (DAPA, also called 7,8-diammoniononanoate) to form a ureido ring. In Bacillus cereus (strain AH820), this protein is ATP-dependent dethiobiotin synthetase BioD.